Consider the following 412-residue polypeptide: Tyrosine--tRNA ligase (412 aa).

L-tyrosine is bound at residue Tyr41. Positions 46-55 (ATADSLHVGH) match the 'HIGH' region motif. Residues Tyr174 and Gln178 each contribute to the L-tyrosine site. Positions 234–238 (KMGKS) match the 'KMSKS' region motif. Lys237 is a binding site for ATP. An S4 RNA-binding domain is found at 348–411 (LSLTDLLLEH…KKQHLHLRLE (64 aa)).

It belongs to the class-I aminoacyl-tRNA synthetase family. TyrS type 1 subfamily. As to quaternary structure, homodimer.

It is found in the cytoplasm. The catalysed reaction is tRNA(Tyr) + L-tyrosine + ATP = L-tyrosyl-tRNA(Tyr) + AMP + diphosphate + H(+). Its function is as follows. Catalyzes the attachment of tyrosine to tRNA(Tyr) in a two-step reaction: tyrosine is first activated by ATP to form Tyr-AMP and then transferred to the acceptor end of tRNA(Tyr). This chain is Tyrosine--tRNA ligase, found in Pseudomonas aeruginosa (strain LESB58).